Consider the following 414-residue polypeptide: xyloglucan O-acetyltransferase 2 (414 aa).

The Cytoplasmic segment spans residues 1–26 (MKSSSSIFRETSEKKSERWMMMNIGR). A helical; Signal-anchor for type II membrane protein membrane pass occupies residues 27–47 (FSPFFLSSFCITLFFTGFFVY). The Lumenal portion of the chain corresponds to 48-414 (QNPFKSIADQ…FLMAIIRQLR (367 aa)). 4 disulfide bridges follow: cysteine 70–cysteine 120, cysteine 91–cysteine 156, cysteine 100–cysteine 394, and cysteine 317–cysteine 390. Residue asparagine 88 is glycosylated (N-linked (GlcNAc...) asparagine). The GDS motif signature appears at 143 to 145 (GDS). Residue serine 145 is the Nucleophile of the active site. Residues asparagine 205, asparagine 263, and asparagine 308 are each glycosylated (N-linked (GlcNAc...) asparagine). Aspartate 389 (proton donor) is an active-site residue. The DXXH motif signature appears at 389–392 (DCVH). The active-site Proton acceptor is the histidine 392.

It belongs to the PC-esterase family. TBL subfamily.

The protein localises to the membrane. In terms of biological role, xyloglucan acetyltransferase that catalyzes the acetylation of fucosylated Gal residues on xyloglucan side chains. Predominantly catalyze 6-O-monoacetylation of Gal residues in the Fuc-Gal-Xyl trisaccharide side chains of xyloglucan oligomers. Involved in xyloglucan specific O-acetylation in seeds. The polypeptide is xyloglucan O-acetyltransferase 2 (Arabidopsis thaliana (Mouse-ear cress)).